Consider the following 179-residue polypeptide: Large ribosomal subunit protein uL5 (179 aa).

The protein belongs to the universal ribosomal protein uL5 family. In terms of assembly, part of the 50S ribosomal subunit; part of the 5S rRNA/L5/L18/L25 subcomplex. Contacts the 5S rRNA and the P site tRNA. Forms a bridge to the 30S subunit in the 70S ribosome.

This is one of the proteins that bind and probably mediate the attachment of the 5S RNA into the large ribosomal subunit, where it forms part of the central protuberance. In the 70S ribosome it contacts protein S13 of the 30S subunit (bridge B1b), connecting the 2 subunits; this bridge is implicated in subunit movement. Contacts the P site tRNA; the 5S rRNA and some of its associated proteins might help stabilize positioning of ribosome-bound tRNAs. This chain is Large ribosomal subunit protein uL5, found in Agathobacter rectalis (strain ATCC 33656 / DSM 3377 / JCM 17463 / KCTC 5835 / VPI 0990) (Eubacterium rectale).